The chain runs to 422 residues: C-type lectin domain family 4 member M (422 aa).

Over 1–49 (MSDSKEPRVQPLGLLEEDPTTSGIRLFPRDFQFQQTHGHKSSTGCLGHG) the chain is Cytoplasmic. The Endocytosis signal signature appears at 14–15 (LL). Residues 50 to 70 (PLVLQLLSFALLAGVLVAILV) form a helical; Signal-anchor for type II membrane protein membrane-spanning segment. Over 71–422 (QVYKVPSSLS…KKPIACFRDE (352 aa)) the chain is Extracellular. A glycan (N-linked (GlcNAc...) asparagine) is linked at N92. 8 consecutive repeat copies span residues 108–130 (KLQE…PEKS), 131–151 (KQQE…ELPE), 154–176 (QLQE…PEES), 177–199 (RLQE…PEKS), 200–222 (RLQE…PEKS), 223–245 (RLQE…PEKS), 246–268 (KLQE…PDQS), and 269–291 (KQQQ…CCRC). Residues 108-292 (KLQEIYQELT…AFERLCCRCP (185 aa)) are 8 X approximate tandem repeats. Cystine bridges form between C288/C418, C291/C302, C319/C412, and C391/C404. In terms of domain architecture, C-type lectin spans 297–413 (FFQGNCYFMS…CNVDNYWICK (117 aa)). Ca(2+) contacts are provided by E382, N384, S386, E389, N400, and D401. N-linked (GlcNAc...) asparagine glycosylation is present at N384.

In terms of assembly, homotetramer.

The protein resides in the membrane. Functionally, probable pathogen-recognition receptor involved in peripheral immune surveillance in liver. May mediate the endocytosis of pathogens which are subsequently degraded in lysosomal compartments. Probably recognizes in a calcium-dependent manner high mannose N-linked oligosaccharides in a variety of pathogen antigens. Is a receptor for ICAM3, probably by binding to mannose-like carbohydrates. In Symphalangus syndactylus (Siamang), this protein is C-type lectin domain family 4 member M (CLEC4M).